A 448-amino-acid chain; its full sequence is Metacaspase-1 (448 aa).

The interval 1–129 is disordered; it reads MFPGQGRHTY…GHYSRPPTDS (129 aa). Residues 10 to 44 show a composition bias toward low complexity; the sequence is YGGQQSNYSNQQQGYDQGYNQGYGQAYGQEYNQGY. Residues 61–70 show a composition bias toward pro residues; the sequence is SGPPPGPPPG. A compositionally biased stretch (polar residues) spans 99 to 114; that stretch reads YGNNQTRGSGNEQNYG. Residues His231 and Cys292 contribute to the active site.

It belongs to the peptidase C14B family.

In terms of biological role, involved in cell death (apoptosis). The chain is Metacaspase-1 (MCA1) from Candida albicans (strain SC5314 / ATCC MYA-2876) (Yeast).